A 310-amino-acid polypeptide reads, in one-letter code: tRNA dimethylallyltransferase (310 aa).

Residue 14 to 21 (GPTASGKS) participates in ATP binding. Residue 16-21 (TASGKS) coordinates substrate. Interaction with substrate tRNA regions lie at residues 39–42 (DSMQ) and 163–167 (QRIVR).

It belongs to the IPP transferase family. Monomer. Mg(2+) is required as a cofactor.

It carries out the reaction adenosine(37) in tRNA + dimethylallyl diphosphate = N(6)-dimethylallyladenosine(37) in tRNA + diphosphate. Catalyzes the transfer of a dimethylallyl group onto the adenine at position 37 in tRNAs that read codons beginning with uridine, leading to the formation of N6-(dimethylallyl)adenosine (i(6)A). This Brucella ovis (strain ATCC 25840 / 63/290 / NCTC 10512) protein is tRNA dimethylallyltransferase.